Consider the following 315-residue polypeptide: Ester hydrolase C11orf54 homolog (315 aa).

His-266, His-268, and His-278 together coordinate Zn(2+).

In terms of assembly, monomer.

Its subcellular location is the nucleus. Functionally, exhibits ester hydrolase activity on the substrate p-nitrophenyl acetate. The sequence is that of Ester hydrolase C11orf54 homolog from Bos taurus (Bovine).